The chain runs to 86 residues: Short neurotoxin homolog NTL1 (86 aa).

A signal peptide spans 1 to 21 (MKTLLLSLVVLTIACLDLGYT). Intrachain disulfides connect Cys-24/Cys-45, Cys-38/Cys-62, Cys-66/Cys-78, and Cys-79/Cys-84.

As to expression, expressed by the venom gland.

It localises to the secreted. This Bungarus multicinctus (Many-banded krait) protein is Short neurotoxin homolog NTL1.